The chain runs to 436 residues: Arginine biosynthesis bifunctional protein ArgJ, mitochondrial (436 aa).

Substrate contacts are provided by threonine 172, lysine 198, threonine 209, glutamate 298, asparagine 431, and serine 436. The active-site Nucleophile is threonine 209.

Belongs to the ArgJ family. Heterodimer of an alpha and a beta chain. In terms of processing, the alpha and beta chains are autoproteolytically processed from a single precursor protein within the mitochondrion.

The protein resides in the mitochondrion matrix. It catalyses the reaction N(2)-acetyl-L-ornithine + L-glutamate = N-acetyl-L-glutamate + L-ornithine. The catalysed reaction is L-glutamate + acetyl-CoA = N-acetyl-L-glutamate + CoA + H(+). It functions in the pathway amino-acid biosynthesis; L-arginine biosynthesis; L-ornithine and N-acetyl-L-glutamate from L-glutamate and N(2)-acetyl-L-ornithine (cyclic): step 1/1. Its pathway is amino-acid biosynthesis; L-arginine biosynthesis; N(2)-acetyl-L-ornithine from L-glutamate: step 1/4. Functionally, catalyzes two activities which are involved in the cyclic version of arginine biosynthesis: the synthesis of acetylglutamate from glutamate and acetyl-CoA, and of ornithine by transacetylation between acetylornithine and glutamate. The polypeptide is Arginine biosynthesis bifunctional protein ArgJ, mitochondrial (Meyerozyma guilliermondii (strain ATCC 6260 / CBS 566 / DSM 6381 / JCM 1539 / NBRC 10279 / NRRL Y-324) (Yeast)).